Reading from the N-terminus, the 352-residue chain is Putative [LysW]-L-2-aminoadipate 6-phosphate reductase (352 aa).

Residue Ser-11–Thr-14 coordinates NADP(+). The active site involves Cys-148. Asn-319 serves as a coordination point for NADP(+).

The protein belongs to the NAGSA dehydrogenase family. Type 1 subfamily. LysY sub-subfamily.

It localises to the cytoplasm. It catalyses the reaction [amino-group carrier protein]-C-terminal-N-(1-carboxy-5-oxopentan-1-yl)-L-glutamine + phosphate + NADP(+) = [amino-group carrier protein]-C-terminal-N-(1-carboxy-5-phosphooxy-5-oxopentan-1-yl)-L-glutamine + NADPH + H(+). It participates in amino-acid biosynthesis; L-lysine biosynthesis via AAA pathway; L-lysine from L-alpha-aminoadipate (Thermus route): step 3/5. Its function is as follows. Catalyzes the NADPH-dependent reduction of [LysW]-aminoadipate 6-phosphate to yield [LysW]-aminoadipate 6-semialdehyde. This chain is Putative [LysW]-L-2-aminoadipate 6-phosphate reductase, found in Thermomicrobium roseum (strain ATCC 27502 / DSM 5159 / P-2).